The sequence spans 147 residues: Large ribosomal subunit protein uL13 (147 aa).

The protein belongs to the universal ribosomal protein uL13 family. Part of the 50S ribosomal subunit.

Functionally, this protein is one of the early assembly proteins of the 50S ribosomal subunit, although it is not seen to bind rRNA by itself. It is important during the early stages of 50S assembly. The polypeptide is Large ribosomal subunit protein uL13 (Levilactobacillus brevis (strain ATCC 367 / BCRC 12310 / CIP 105137 / JCM 1170 / LMG 11437 / NCIMB 947 / NCTC 947) (Lactobacillus brevis)).